We begin with the raw amino-acid sequence, 60 residues long: Large ribosomal subunit protein bL32 (60 aa).

A compositionally biased stretch (basic residues) spans 1–20 (MAVQKSRKSRSRRDMRRSHH). The disordered stretch occupies residues 1–60 (MAVQKSRKSRSRRDMRRSHHHMEVAELSIDATTGEKHRRHHMTKDGFYRGRQLFKASQED).

This sequence belongs to the bacterial ribosomal protein bL32 family.

In Psychrobacter sp. (strain PRwf-1), this protein is Large ribosomal subunit protein bL32.